The sequence spans 627 residues: Carene synthase 2, chloroplastic (627 aa).

The N-terminal 36 residues, 1–36, are a transit peptide targeting the chloroplast; that stretch reads MSVISIVPLASKSCLYKSLMSSTHELKALCRPIVTL. Mg(2+)-binding residues include aspartate 378, aspartate 382, and aspartate 530. Positions 378–382 match the DDXXD motif motif; the sequence is DDMYD.

This sequence belongs to the terpene synthase family. Tpsd subfamily. Mg(2+) serves as cofactor. Requires Mn(2+) as cofactor.

It is found in the plastid. Its subcellular location is the chloroplast. It carries out the reaction (2E)-geranyl diphosphate = (+)-car-3-ene + diphosphate. The protein operates within terpene metabolism; oleoresin biosynthesis. Its function is as follows. Terpene synthase (TPS) involved in defensive oleoresin formation in conifers in response to insect attack (e.g. white pine weevil P.strobi) or other injury. The chain is Carene synthase 2, chloroplastic (TPS-3car2) from Picea sitchensis (Sitka spruce).